A 212-amino-acid chain; its full sequence is Cytidylate kinase (212 aa).

Residue 7–15 (GPAASGKGT) participates in ATP binding.

Belongs to the cytidylate kinase family. Type 1 subfamily.

The protein resides in the cytoplasm. It catalyses the reaction CMP + ATP = CDP + ADP. The catalysed reaction is dCMP + ATP = dCDP + ADP. This Rhodopseudomonas palustris (strain TIE-1) protein is Cytidylate kinase.